We begin with the raw amino-acid sequence, 235 residues long: MVIGPFINASAVLLGGVLGALLSQRLPERIRVSMTSIFGLASLGIGILLVVKCANLPAMVLATLLGALIGEICLLEKGVNTAVAKAQNLFRHSRKKPAHESFIQNYVAIIVLFCASGTGIFGAMNEGMTGDPSILIAKSFLDFFTAMIFACSLGIAVSVISIPLLIIQLTLAWAAALILPLTTPSMMADFSAVGGLLLLATGLRICGIKMFPVVNMLPALLLAMPLSAAWTAWFA.

Transmembrane regions (helical) follow at residues valine 2–leucine 22, methionine 34–alanine 54, leucine 56–glutamate 76, phenylalanine 102–glycine 122, methionine 147–isoleucine 167, isoleucine 178–leucine 198, and methionine 210–tryptophan 230.

It is found in the cell membrane. This is an uncharacterized protein from Escherichia coli (strain K12).